The primary structure comprises 72 residues: Conotoxin TxMMSK-04 (72 aa).

Residues Met1–Ala20 form the signal peptide. Positions Val21–Val51 are excised as a propeptide. Gln55 carries the post-translational modification Pyrrolidone carboxylic acid. 3 disulfide bridges follow: Cys57-Cys71, Cys58-Cys67, and Cys63-Cys70. Pro69 is subject to 4-hydroxyproline. Cys71 carries the cysteine amide modification.

The protein belongs to the conotoxin M superfamily. In terms of tissue distribution, expressed by the venom duct.

The protein resides in the secreted. This chain is Conotoxin TxMMSK-04, found in Conus textile (Cloth-of-gold cone).